Consider the following 510-residue polypeptide: Calmodulin-binding receptor-like cytoplasmic kinase 3 (510 aa).

An N-terminal signal peptide occupies residues 1–30 (MGGDDLSFTRLVITALFGLLMLLQIKETSA). Over residues 166–178 (VSSFEMSPSSEKI) the composition is skewed to polar residues. The interval 166-209 (VSSFEMSPSSEKIPQSPFRAPPSPSRVPQSPSRYAMSPRPSRLG) is disordered. Phosphothreonine is present on T214. Residues 225 to 499 (FADSHQIGEG…MEAVGKQLWA (275 aa)) form the Protein kinase domain. ATP is bound by residues 231-239 (IGEGGFGVV) and K253. The tract at residues 240–265 (FKGVLDDGQVVAIKRAKKEHFENLRT) is caM-binding. D350 functions as the Proton acceptor in the catalytic mechanism. S354 carries the post-translational modification Phosphoserine. Phosphothreonine occurs at positions 386 and 391. A Phosphotyrosine modification is found at Y399.

This sequence belongs to the protein kinase superfamily. Ser/Thr protein kinase family. Interacts with calmodulin (CaM) in a Ca(2+)-dependent manner.

Its subcellular location is the cytoplasm. The catalysed reaction is L-seryl-[protein] + ATP = O-phospho-L-seryl-[protein] + ADP + H(+). The enzyme catalyses L-threonyl-[protein] + ATP = O-phospho-L-threonyl-[protein] + ADP + H(+). The polypeptide is Calmodulin-binding receptor-like cytoplasmic kinase 3 (CRCK3) (Arabidopsis thaliana (Mouse-ear cress)).